The primary structure comprises 267 residues: Kit ligand (267 aa).

An N-terminal signal peptide occupies residues 1-25; it reads MKKTQTWIITCIYLQLLLFNPLVHT. At Q26 the chain carries Pyrrolidone carboxylic acid. Topologically, residues 26–215 are extracellular; sequence QGICRNRVTD…SNSIEDSSLQ (190 aa). 2 cysteine pairs are disulfide-bonded: C29/C114 and C68/C164. N-linked (GlcNAc...) asparagine glycans are attached at residues N90, N97, N145, and N196. The helical transmembrane segment at 216-238 threads the bilayer; sequence WAAVALPAFFSLVIGFAFGALYW. Over 239-267 the chain is Cytoplasmic; sequence KKKQPNLTRTVENRQINEEDNEISMLQEK.

The protein belongs to the SCF family. Homodimer, non-covalently linked. Heterotetramer with KIT, binding two KIT molecules; thereby mediates KIT dimerization and subsequent activation by autophosphorylation. A soluble form is produced by proteolytic processing of the extracellular domain.

The protein resides in the cytoplasm. It is found in the cytoskeleton. The protein localises to the cell membrane. It localises to the cell projection. Its subcellular location is the lamellipodium. The protein resides in the filopodium. It is found in the secreted. Ligand for the receptor-type protein-tyrosine kinase KIT. Plays an essential role in the regulation of cell survival and proliferation, hematopoiesis, stem cell maintenance, gametogenesis, mast cell development, migration and function, and in melanogenesis. KITLG/SCF binding can activate several signaling pathways. Promotes phosphorylation of PIK3R1, the regulatory subunit of phosphatidylinositol 3-kinase, and subsequent activation of the kinase AKT1. KITLG/SCF and KIT also transmit signals via GRB2 and activation of RAS, RAF1 and the MAP kinases MAPK1/ERK2 and/or MAPK3/ERK1. KITLG/SCF and KIT promote activation of STAT family members STAT1, STAT3 and STAT5. KITLG/SCF and KIT promote activation of PLCG1, leading to the production of the cellular signaling molecules diacylglycerol and inositol 1,4,5-trisphosphate. KITLG/SCF acts synergistically with other cytokines, probably interleukins. The chain is Kit ligand (KITLG) from Ovis aries (Sheep).